Here is a 245-residue protein sequence, read N- to C-terminus: uncharacterized protein (245 aa).

This is an uncharacterized protein from Dictyostelium discoideum (Social amoeba).